A 463-amino-acid chain; its full sequence is Argininosuccinate lyase (463 aa).

It belongs to the lyase 1 family. Argininosuccinate lyase subfamily.

Its subcellular location is the cytoplasm. It carries out the reaction 2-(N(omega)-L-arginino)succinate = fumarate + L-arginine. Its pathway is amino-acid biosynthesis; L-arginine biosynthesis; L-arginine from L-ornithine and carbamoyl phosphate: step 3/3. The protein is Argininosuccinate lyase of Prochlorococcus marinus (strain NATL2A).